Consider the following 441-residue polypeptide: Ribosomal protein uS12 methylthiotransferase RimO (441 aa).

Positions proline 8 to proline 118 constitute an MTTase N-terminal domain. Cysteine 17, cysteine 53, cysteine 82, cysteine 150, cysteine 154, and cysteine 157 together coordinate [4Fe-4S] cluster. The 238-residue stretch at leucine 136–glutamate 373 folds into the Radical SAM core domain. Residues glutamine 376–valine 441 form the TRAM domain.

The protein belongs to the methylthiotransferase family. RimO subfamily. [4Fe-4S] cluster is required as a cofactor.

The protein localises to the cytoplasm. It catalyses the reaction L-aspartate(89)-[ribosomal protein uS12]-hydrogen + (sulfur carrier)-SH + AH2 + 2 S-adenosyl-L-methionine = 3-methylsulfanyl-L-aspartate(89)-[ribosomal protein uS12]-hydrogen + (sulfur carrier)-H + 5'-deoxyadenosine + L-methionine + A + S-adenosyl-L-homocysteine + 2 H(+). In terms of biological role, catalyzes the methylthiolation of an aspartic acid residue of ribosomal protein uS12. The protein is Ribosomal protein uS12 methylthiotransferase RimO of Salmonella paratyphi A (strain ATCC 9150 / SARB42).